The chain runs to 179 residues: ATP synthase subunit delta (179 aa).

It belongs to the ATPase delta chain family. As to quaternary structure, F-type ATPases have 2 components, F(1) - the catalytic core - and F(0) - the membrane proton channel. F(1) has five subunits: alpha(3), beta(3), gamma(1), delta(1), epsilon(1). F(0) has three main subunits: a(1), b(2) and c(10-14). The alpha and beta chains form an alternating ring which encloses part of the gamma chain. F(1) is attached to F(0) by a central stalk formed by the gamma and epsilon chains, while a peripheral stalk is formed by the delta and b chains.

It is found in the cell membrane. Functionally, f(1)F(0) ATP synthase produces ATP from ADP in the presence of a proton or sodium gradient. F-type ATPases consist of two structural domains, F(1) containing the extramembraneous catalytic core and F(0) containing the membrane proton channel, linked together by a central stalk and a peripheral stalk. During catalysis, ATP synthesis in the catalytic domain of F(1) is coupled via a rotary mechanism of the central stalk subunits to proton translocation. Its function is as follows. This protein is part of the stalk that links CF(0) to CF(1). It either transmits conformational changes from CF(0) to CF(1) or is implicated in proton conduction. In Listeria monocytogenes serovar 1/2a (strain ATCC BAA-679 / EGD-e), this protein is ATP synthase subunit delta.